We begin with the raw amino-acid sequence, 179 residues long: Large ribosomal subunit protein uL5 (179 aa).

The protein belongs to the universal ribosomal protein uL5 family. Part of the 50S ribosomal subunit; part of the 5S rRNA/L5/L18/L25 subcomplex. Contacts the 5S rRNA and the P site tRNA. Forms a bridge to the 30S subunit in the 70S ribosome.

This is one of the proteins that bind and probably mediate the attachment of the 5S RNA into the large ribosomal subunit, where it forms part of the central protuberance. In the 70S ribosome it contacts protein S13 of the 30S subunit (bridge B1b), connecting the 2 subunits; this bridge is implicated in subunit movement. Contacts the P site tRNA; the 5S rRNA and some of its associated proteins might help stabilize positioning of ribosome-bound tRNAs. The polypeptide is Large ribosomal subunit protein uL5 (Albidiferax ferrireducens (strain ATCC BAA-621 / DSM 15236 / T118) (Rhodoferax ferrireducens)).